The primary structure comprises 360 residues: Peptide chain release factor 1 (360 aa).

N5-methylglutamine is present on glutamine 235.

The protein belongs to the prokaryotic/mitochondrial release factor family. In terms of processing, methylated by PrmC. Methylation increases the termination efficiency of RF1.

The protein localises to the cytoplasm. Peptide chain release factor 1 directs the termination of translation in response to the peptide chain termination codons UAG and UAA. This Cupriavidus taiwanensis (strain DSM 17343 / BCRC 17206 / CCUG 44338 / CIP 107171 / LMG 19424 / R1) (Ralstonia taiwanensis (strain LMG 19424)) protein is Peptide chain release factor 1.